Here is a 355-residue protein sequence, read N- to C-terminus: Peptide chain release factor 1 (355 aa).

Gln231 bears the N5-methylglutamine mark. Residues 281-291 show a composition bias toward basic and acidic residues; sequence ERLAKESEARK. The tract at residues 281–302 is disordered; that stretch reads ERLAKESEARKSQVGSGDRSER.

It belongs to the prokaryotic/mitochondrial release factor family. Post-translationally, methylated by PrmC. Methylation increases the termination efficiency of RF1.

It localises to the cytoplasm. Peptide chain release factor 1 directs the termination of translation in response to the peptide chain termination codons UAG and UAA. The sequence is that of Peptide chain release factor 1 from Campylobacter jejuni subsp. doylei (strain ATCC BAA-1458 / RM4099 / 269.97).